We begin with the raw amino-acid sequence, 464 residues long: Cysteine--tRNA ligase (464 aa).

Cysteine 29 contributes to the Zn(2+) binding site. A 'HIGH' region motif is present at residues 31 to 41 (PTVYDFAHIGN). Zn(2+)-binding residues include cysteine 224, histidine 249, and glutamate 253. Positions 282–286 (KMSKS) match the 'KMSKS' region motif. ATP is bound at residue lysine 285.

Belongs to the class-I aminoacyl-tRNA synthetase family. In terms of assembly, monomer. The cofactor is Zn(2+).

Its subcellular location is the cytoplasm. The catalysed reaction is tRNA(Cys) + L-cysteine + ATP = L-cysteinyl-tRNA(Cys) + AMP + diphosphate. The polypeptide is Cysteine--tRNA ligase (Afipia carboxidovorans (strain ATCC 49405 / DSM 1227 / KCTC 32145 / OM5) (Oligotropha carboxidovorans)).